A 453-amino-acid polypeptide reads, in one-letter code: tRNA modification GTPase MnmE (453 aa).

The (6S)-5-formyl-5,6,7,8-tetrahydrofolate site is built by R22, E79, and K119. A TrmE-type G domain is found at 215-376 (GMKVVIAGRP…LKQHLKSLMG (162 aa)). N225 provides a ligand contact to K(+). GTP is bound by residues 225 to 230 (NAGKSS), 244 to 250 (TEIAGTT), 269 to 272 (DTAG), and 334 to 337 (NKAD). Residue S229 participates in Mg(2+) binding. Residues T244, I246, and T249 each coordinate K(+). T250 contributes to the Mg(2+) binding site. K453 contacts (6S)-5-formyl-5,6,7,8-tetrahydrofolate.

Belongs to the TRAFAC class TrmE-Era-EngA-EngB-Septin-like GTPase superfamily. TrmE GTPase family. As to quaternary structure, homodimer. Heterotetramer of two MnmE and two MnmG subunits. The cofactor is K(+).

The protein localises to the cytoplasm. Exhibits a very high intrinsic GTPase hydrolysis rate. Involved in the addition of a carboxymethylaminomethyl (cmnm) group at the wobble position (U34) of certain tRNAs, forming tRNA-cmnm(5)s(2)U34. The chain is tRNA modification GTPase MnmE from Shewanella denitrificans (strain OS217 / ATCC BAA-1090 / DSM 15013).